We begin with the raw amino-acid sequence, 393 residues long: Serine/threonine protein kinase AFUB_078980 (393 aa).

A Protein kinase domain is found at 61-390 (YQVLSKLGFG…APELLTDPWL (330 aa)). Residues 67 to 75 (LGFGANSTV) and Lys90 contribute to the ATP site. Asp190 (proton acceptor) is an active-site residue.

It belongs to the protein kinase superfamily. CMGC Ser/Thr protein kinase family.

It catalyses the reaction L-seryl-[protein] + ATP = O-phospho-L-seryl-[protein] + ADP + H(+). The catalysed reaction is L-threonyl-[protein] + ATP = O-phospho-L-threonyl-[protein] + ADP + H(+). In terms of biological role, serine/threonine protein kinase; part of the subtelomeric hrmA-associated cluster (HAC) containing genes that alter the hyphal surface (such as reduced total chitin or increased beta-glucan exposure) and perturb inter-hyphal interactions within the developing biofilms, resulting in a loss of vertically aligned polarized growing filaments. Consequently, this hypoxia-typic morphotype (called H-MORPH) with altered biofilm architecture leads to increased hypoxia fitness, increased host inflammation, rapid disease progression, and mortality in a murine model of invasive aspergillosis. The sequence is that of Serine/threonine protein kinase AFUB_078980 from Aspergillus fumigatus (strain CBS 144.89 / FGSC A1163 / CEA10) (Neosartorya fumigata).